Here is a 1048-residue protein sequence, read N- to C-terminus: Anguibactin system regulator (1048 aa).

In terms of domain architecture, Carrier spans 965–1039; the sequence is PIITASEDRV…AFAIIMDRCR (75 aa).

The protein belongs to the ATP-dependent AMP-binding enzyme family.

It participates in siderophore biosynthesis; anguibactin biosynthesis. Its function is as follows. Bifunctional protein that plays an essential role in virulence. Plays a role in both production of the siderophore anguibactin and regulation of iron transport genes. The protein is Anguibactin system regulator (angR) of Vibrio anguillarum (strain ATCC 68554 / 775) (Listonella anguillarum).